A 479-amino-acid polypeptide reads, in one-letter code: Ribosomal RNA small subunit methyltransferase F (479 aa).

S-adenosyl-L-methionine contacts are provided by residues 125–131, E149, G177, and D194; that span reads AAAPGSK. C247 functions as the Nucleophile in the catalytic mechanism.

It belongs to the class I-like SAM-binding methyltransferase superfamily. RsmB/NOP family.

Its subcellular location is the cytoplasm. The enzyme catalyses cytidine(1407) in 16S rRNA + S-adenosyl-L-methionine = 5-methylcytidine(1407) in 16S rRNA + S-adenosyl-L-homocysteine + H(+). Functionally, specifically methylates the cytosine at position 1407 (m5C1407) of 16S rRNA. In Shigella flexneri serotype 5b (strain 8401), this protein is Ribosomal RNA small subunit methyltransferase F.